The sequence spans 322 residues: Quinolinate synthase (322 aa).

Residues H37 and S54 each coordinate iminosuccinate. C99 is a binding site for [4Fe-4S] cluster. Iminosuccinate is bound by residues 125–127 and S142; that span reads YIN. C185 contacts [4Fe-4S] cluster. Iminosuccinate is bound by residues 211–213 and T228; that span reads HPE. A [4Fe-4S] cluster-binding site is contributed by C278.

Belongs to the quinolinate synthase family. Type 2 subfamily. Requires [4Fe-4S] cluster as cofactor.

The protein resides in the cytoplasm. It catalyses the reaction iminosuccinate + dihydroxyacetone phosphate = quinolinate + phosphate + 2 H2O + H(+). It functions in the pathway cofactor biosynthesis; NAD(+) biosynthesis; quinolinate from iminoaspartate: step 1/1. Catalyzes the condensation of iminoaspartate with dihydroxyacetone phosphate to form quinolinate. The sequence is that of Quinolinate synthase from Prosthecochloris aestuarii (strain DSM 271 / SK 413).